The primary structure comprises 2222 residues: MMFGKKKNNGGSSTARYSAGNKYNTLSNNYALSAQQLLNASKIDDIDSMMGFERYVPPQYNGRFDAKDIDQIPGRVGWLTNMHATLVSQETLSSGSNGGGNSNDGERVTTNQGISGVDFYFLDEEGGSFKSTVVYDPYFFIACNDESRVNDVEELVKKYLESCLKSLQIIRKEDLTMDNHLLGLQKTLIKLSFVNSNQLFEARKLLRPILQDNANNNVQRNIYNVAANGSEKVDAKHLIEDIREYDVPYHVRVSIDKDIRVGKWYKVTQQGFIEDTRKIAFADPVVMAFDIETTKPPLKFPDSAVDQIMMISYMIDGEGFLITNREIISEDIEDFEYTPKPEYPGFFTIFNENDEVALLQRFFEHIRDVRPTVISTFNGDFFDWPFIHNRSKIHGLDMFDEIGFAPDAEGEYKSSYCSHMDCFRWVKRDSYLPQGSQGLKAVTQSKLGYNPIELDPELMTPYAFEKPQHLSEYSVSDAVATYYLYMKYVHPFIFSLCTIIPLNPDETLRKGTGTLCEMLLMVQAYQHNILLPNKHTDPIERFYDGHLLESETYVGGHVESLEAGVFRSDLKNEFKIDPSAIDELLQELPEALKFSVEVENKSSVDKVTNFEEIKNQITQKLLELKENNIRNELPLIYHVDVASMYPNIMTTNRLQPDSIKAERDCASCDFNRPGKTCARKLKWAWRGEFFPSKMDEYNMIKRALQNETFPNKNKFSKKKVLTFDELSYADQVIHIKKRLTEYSRKVYHRVKVSEIVEREAIVCQRENPFYVDTVKSFRDRRYEFKGLAKTWKGNLSKIDPSDKHARDEAKKMIVLYDSLQLAHKVILNSFYGYVMRKGSRWYSMEMAGITCLTGATIIQMARALVERVGRPLELDTDGIWCILPKSFPETYFFTLENGKKLYLSYPCSMLNYRVHQKFTNHQYQELKDPLNYIYETHSENTIFFEVDGPYKAMILPSSKEEGKGIKKRYAVFNEDGSLAELKGFELKRRGELQLIKNFQSDIFKVFLEGDTLEGCYSAVASVCNRWLDVLDSHGLMLEDEDLVSLICENRSMSKTLKEYEGQKSTSITTARRLGDFLGEDMVKDKGLQCKYIISSKPFNAPVTERAIPVAIFSADIPIKRSFLRRWTLDPSLEDLDIRTIIDWGYYRERLGSAIQKIITIPAALQGVSNPVPRVEHPDWLKRKIATKEDKFKQTSLTKFFSKTKNVPTMGKIKDIEDLFEPTVEEDNAKIKIARTTKKKAVSKRKRNQLTNEEDPLVLPSEIPSMDEDYVGWLNYQKIKWKIQARDRKRRDQLFGNTNSSRERSALGSMIRKQAESYANSTWEVLQYKDSGEPGVLEVFVTINGKVQNITFHIPKTIYMKFKSQTMPLQKIKNCLIEKSSASLPNNPKTSNPAGGQLFKITLPESVFLEEKENCTSIFNDENVLGVFEGTITPHQRAIMDLGASVTFRSKAMGALGKGIQQGFEMKDLSMAENERYLSGFSMDIGYLLHFPTSIGYEFFSLFKSWGDTITILVLKPSNQAQEINASSLGQIYKQMFEKKKGKIETYSYLVDIKEDINFEFVYFTDISKLYRRLSQETTKLKEERGLQFLLLLQSPFITKLLGTIRLLNQMPIVKLSLNEVLLPQLNWQPTLLKKLVNHVLSSGSWISHLIKLSQYSNIPICNLRLDSMDYIIDVLYARKLKKENIVLWWNEKAPLPDHGGIQNDFDLNTSWIMNDSEFPKINNSGVYDNVVLDVGVDNLTVNTILTSALINDAEGSDLVNNNMGIDDKDAVINSPSEFVHDAFSNDALNVLRGMLKEWWDEALKENSTADLLVNSLASWVQNPNAKLFDGLLRYHVHNLTKKALLQLVNEFSALGSTIVYADRNQILIKTNKYSPENCYAYSQYMMKAVRTNPMFSYLDLNIKRYWDLLIWMDKFNFSGLACIEIEEKENQDYTAVSQWQLKKFLSPIYQPEFEDWMMIILDSMLKTKQSYLKLNSGTQRPTQIVNVKKQDKEDSVENSLNGFSHLFSKPLMKRVKKLFKNQQEFILDPQYEADYVIPVLPGSHLNVKNPLLELVKSLCHVMLLSKSTILEIRTLRKELLKIFELREFAKVAEFKDPSLSLVVPDFLCEYCFFISDIDFCKAAPESIFSCVRCHKAFNQVLLQEHLIQKLRSDIESYLIQDLRCSRCHKVKRDYMSAHCPCAGAWEGTLPRESIVQKLNVFKQVAKYYGFDILLSCIADLTI.

The segment at 90–110 (ETLSSGSNGGGNSNDGERVTT) is disordered. Cysteine 2108, cysteine 2111, cysteine 2130, and cysteine 2133 together coordinate Zn(2+). The CysA-type zinc-finger motif lies at 2108-2133 (CEYCFFISDIDFCKAAPESIFSCVRC). [4Fe-4S] cluster is bound by residues cysteine 2164, cysteine 2167, cysteine 2179, and cysteine 2181. Residues 2164–2181 (CSRCHKVKRDYMSAHCPC) carry the CysB motif motif.

It belongs to the DNA polymerase type-B family. As to quaternary structure, DNA polymerase epsilon is a heterotetramer consisting of POL2, DPB2, DPB3 and DPB4. It depends on [4Fe-4S] cluster as a cofactor.

The protein localises to the nucleus. The catalysed reaction is DNA(n) + a 2'-deoxyribonucleoside 5'-triphosphate = DNA(n+1) + diphosphate. Functionally, catalytic component of the DNA polymerase epsilon complex which participates in chromosomal DNA replication. Required during synthesis of the leading DNA strands at the replication fork, binds at/or near replication origins and moves along DNA with the replication fork. Has 3'-5' proofreading exonuclease activity that corrects errors arising during DNA replication. The polypeptide is DNA polymerase epsilon catalytic subunit A (POL2) (Saccharomyces cerevisiae (strain ATCC 204508 / S288c) (Baker's yeast)).